Reading from the N-terminus, the 391-residue chain is ETS-related transcription factor Elf-3 (391 aa).

The region spanning 65-151 (DPLAVLHLAE…AQLRDLTSNS (87 aa)) is the PNT domain. A disordered region spans residues 200–271 (YCSTYGPGAP…HGKRKRGRPR (72 aa)). Positions 211-229 (PGSSDVSTARTATPQSSHA) are enriched in polar residues. Residues 242 to 261 (TESKVFPRDGFPDYKKGEPK) are compositionally biased toward basic and acidic residues. The segment covering 262–271 (HGKRKRGRPR) has biased composition (basic residues). The segment at residues 293–375 (THLWEFIRDI…DGRRLVYKFG (83 aa)) is a DNA-binding region (ETS).

The protein belongs to the ETS family. In terms of assembly, interacts with TBP. Interacts with CREBBP and EP300; these act as transcriptional coactivators of ELF3 and positively modulate its function. Interacts with XRCC5/KU86 and XRCC6/KU70; these inhibit the ability of ELF3 to bind DNA and negatively modulate its transcriptional activity. Associated with CLND7 and POU2F3. Interacts with ZNF768. Expressed in small intestine, colon, lung, kidney and uterus. Also expressed in the corneal epithelium and conjunctiva of the developing and adult eye. Not detected in liver, spleen, thymus, brain, heart, skeletal muscle or ovary.

Its subcellular location is the cytoplasm. It localises to the nucleus. Transcriptional activator that binds and transactivates ETS sequences containing the consensus nucleotide core sequence GGA[AT]. Acts synergistically with POU2F3 to transactivate the SPRR2A promoter and with RUNX1 to transactivate the ANGPT1 promoter. Also transactivates collagenase, CCL20, CLND7, FLG, KRT8, NOS2, PTGS2, SPRR2B, TGFBR2 and TGM3 promoters. Represses KRT4 promoter activity. Involved in mediating vascular inflammation. May play an important role in epithelial cell differentiation and tumorigenesis. May be a critical downstream effector of the ERBB2 signaling pathway. May be associated with mammary gland development and involution. Plays an important role in the regulation of transcription with TATA-less promoters in preimplantation embryos, which is essential in preimplantation development. The polypeptide is ETS-related transcription factor Elf-3 (Mus musculus (Mouse)).